We begin with the raw amino-acid sequence, 335 residues long: Probable cytosolic iron-sulfur protein assembly protein Ciao1 (335 aa).

WD repeat units lie at residues 12-51 (GHKG…WTTK), 57-96 (GHKR…FECN), 101-140 (GHEN…EFEC), 146-185 (PHTQ…SDWD), 192-231 (SHTS…NDAG), 250-289 (QHSR…KRDE), and 301-335 (AHDQ…KMTE).

This sequence belongs to the WD repeat CIA1 family.

Its function is as follows. Essential component of the cytosolic iron-sulfur (Fe/S) protein assembly machinery. Required for the maturation of extramitochondrial Fe/S proteins. In Drosophila ananassae (Fruit fly), this protein is Probable cytosolic iron-sulfur protein assembly protein Ciao1.